A 312-amino-acid polypeptide reads, in one-letter code: Olfactory receptor 6C76 (312 aa).

Topologically, residues 1–23 (MKNRTSVTDFILLGLTDNPQLQV) are extracellular. N-linked (GlcNAc...) asparagine glycosylation is present at Asn3. The chain crosses the membrane as a helical span at residues 24-44 (VIFSFLFLTYVLSVTGNLTII). At 45–57 (SLTLLDSHLKTPM) the chain is on the cytoplasmic side. Residues 58 to 80 (YFFLRNFSLEISFTSVCNPRFLI) form a helical membrane-spanning segment. Residues 81 to 94 (SILTGDKSISYNAC) are Extracellular-facing. Cys94 and Cys176 are joined by a disulfide. The helical transmembrane segment at 95–115 (AAQLFFFIFLGSTEFFLLASM) threads the bilayer. At 116–142 (SYDCYVAICKPLHYTTIMSDRICYQLI) the chain is on the cytoplasmic side. The chain crosses the membrane as a helical span at residues 143–163 (ISSWLAGFLVIFPPLAMGLQL). Residues 164–195 (DFCDSNVIDHFTCDSAPLLQISCTDTSTLELM) are Extracellular-facing. A helical membrane pass occupies residues 196–216 (SFILALFTLISTLILVILSYT). The Cytoplasmic segment spans residues 217 to 238 (YIIRTILRIPSAQQRKKAFSTC). The chain crosses the membrane as a helical span at residues 239 to 259 (SSHVIVVSISYGSCIFMYVKT). The Extracellular portion of the chain corresponds to 260–267 (SAKEGVAL). Residues 268 to 288 (TKGVAILNTSVAPMLNPFIYT) form a helical membrane-spanning segment. Over 289-312 (LRNQQVKQAFKDVLRKISHKKKKH) the chain is Cytoplasmic.

The protein belongs to the G-protein coupled receptor 1 family.

The protein resides in the cell membrane. Odorant receptor. The polypeptide is Olfactory receptor 6C76 (OR6C76) (Homo sapiens (Human)).